A 200-amino-acid polypeptide reads, in one-letter code: Imidazole glycerol phosphate synthase subunit HisH (200 aa).

The Glutamine amidotransferase type-1 domain occupies 3–200 (DLALIDAGGA…LRNFLEMSFP (198 aa)). The Nucleophile role is filled by Cys78. Residues His179 and Glu181 contribute to the active site.

Heterodimer of HisH and HisF.

Its subcellular location is the cytoplasm. The catalysed reaction is 5-[(5-phospho-1-deoxy-D-ribulos-1-ylimino)methylamino]-1-(5-phospho-beta-D-ribosyl)imidazole-4-carboxamide + L-glutamine = D-erythro-1-(imidazol-4-yl)glycerol 3-phosphate + 5-amino-1-(5-phospho-beta-D-ribosyl)imidazole-4-carboxamide + L-glutamate + H(+). It catalyses the reaction L-glutamine + H2O = L-glutamate + NH4(+). Its pathway is amino-acid biosynthesis; L-histidine biosynthesis; L-histidine from 5-phospho-alpha-D-ribose 1-diphosphate: step 5/9. Functionally, IGPS catalyzes the conversion of PRFAR and glutamine to IGP, AICAR and glutamate. The HisH subunit catalyzes the hydrolysis of glutamine to glutamate and ammonia as part of the synthesis of IGP and AICAR. The resulting ammonia molecule is channeled to the active site of HisF. The protein is Imidazole glycerol phosphate synthase subunit HisH of Xanthomonas campestris pv. campestris (strain 8004).